We begin with the raw amino-acid sequence, 744 residues long: Elongation factor G, mitochondrial (744 aa).

The 278-residue stretch at glutamate 39–glycine 316 folds into the tr-type G domain. GTP-binding positions include alanine 48–threonine 55, aspartate 115–histidine 119, and asparagine 169–aspartate 172. The span at valine 725–serine 735 shows a compositional bias: polar residues. The interval valine 725–asparagine 744 is disordered.

Belongs to the TRAFAC class translation factor GTPase superfamily. Classic translation factor GTPase family. EF-G/EF-2 subfamily.

It is found in the mitochondrion. It functions in the pathway protein biosynthesis; polypeptide chain elongation. In terms of biological role, mitochondrial GTPase that catalyzes the GTP-dependent ribosomal translocation step during translation elongation. During this step, the ribosome changes from the pre-translocational (PRE) to the post-translocational (POST) state as the newly formed A-site-bound peptidyl-tRNA and P-site-bound deacylated tRNA move to the P and E sites, respectively. Catalyzes the coordinated movement of the two tRNA molecules, the mRNA and conformational changes in the ribosome. Essential during development as it acts as a retrograde signal from mitochondria to the nucleus to slow down cell proliferation if mitochondrial energy output is low. This chain is Elongation factor G, mitochondrial, found in Drosophila pseudoobscura pseudoobscura (Fruit fly).